We begin with the raw amino-acid sequence, 524 residues long: Putative cysteine ligase BshC (524 aa).

The stretch at 437–457 (AQALDRSARKINYQIEKMERK) forms a coiled coil.

This sequence belongs to the BshC family.

The protein is Putative cysteine ligase BshC of Solibacter usitatus (strain Ellin6076).